A 37-amino-acid polypeptide reads, in one-letter code: Cortex morphogenetic protein A (37 aa).

In terms of assembly, can form a complex with SpoIVA and ClpX.

The protein resides in the forespore. Functionally, ensures proper spore envelope assembly. Represses premature cortex assembly until coat assembly successfully initiates. Also participates in a quality-control pathway that selectively removes defective sporulating cells through regulated cell death. Acts as an adaptator that delivers SpoIVA to the ClpXP proteolytic machinery for degradation, specifically in cells that improperly assemble the spore envelope. In Bacillus subtilis (strain 168), this protein is Cortex morphogenetic protein A.